The chain runs to 430 residues: Long-chain specific acyl-CoA dehydrogenase, mitochondrial (430 aa).

A mitochondrion-targeting transit peptide spans 1–30; it reads MATRLLRGSLRLWGGLCAPRLPTASRCSHS. Position 42 is an N6-acetyllysine (Lys-42). Residues Ser-54 and Ser-55 each carry the phosphoserine modification. Residues Lys-66 and Lys-81 each carry the N6-acetyllysine; alternate modification. An N6-succinyllysine; alternate mark is found at Lys-66 and Lys-81. N6-acetyllysine occurs at positions 92 and 95. Lys-165 is modified (N6-succinyllysine). FAD contacts are provided by residues 170–179 and 203–205; these read IAMTEPGAGS and FIT. Ser-179 is a binding site for substrate. 227–228 provides a ligand contact to substrate; that stretch reads AH. Lys-240 carries the post-translational modification N6-succinyllysine. N6-acetyllysine; alternate occurs at positions 254 and 279. N6-succinyllysine; alternate is present on residues Lys-254 and Lys-279. Residues Tyr-282 and 289–292 contribute to the substrate site; that span reads PQER. Glu-291 (proton acceptor) is an active-site residue. Arg-317 is an FAD binding site. Lys-318 is subject to N6-acetyllysine. N6-acetyllysine; alternate is present on Lys-322. Lys-322 is subject to N6-succinyllysine; alternate. Gln-328 lines the FAD pocket. N6-acetyllysine is present on Lys-358. A Phosphoserine modification is found at Ser-362. 385 to 389 contributes to the FAD binding site; the sequence is QLHGG. Position 412 to 413 (412 to 413) interacts with substrate; the sequence is GG. 414 to 416 contributes to the FAD binding site; the sequence is TNE.

The protein belongs to the acyl-CoA dehydrogenase family. Homotetramer. It depends on FAD as a cofactor. Acetylation at Lys-318 and Lys-322 in proximity of the cofactor-binding sites strongly reduces catalytic activity. These sites are deacetylated by SIRT3.

It is found in the mitochondrion matrix. The enzyme catalyses a long-chain 2,3-saturated fatty acyl-CoA + oxidized [electron-transfer flavoprotein] + H(+) = a long-chain (2E)-enoyl-CoA + reduced [electron-transfer flavoprotein]. It catalyses the reaction hexanoyl-CoA + oxidized [electron-transfer flavoprotein] + H(+) = (2E)-hexenoyl-CoA + reduced [electron-transfer flavoprotein]. The catalysed reaction is octanoyl-CoA + oxidized [electron-transfer flavoprotein] + H(+) = (2E)-octenoyl-CoA + reduced [electron-transfer flavoprotein]. It carries out the reaction decanoyl-CoA + oxidized [electron-transfer flavoprotein] + H(+) = (2E)-decenoyl-CoA + reduced [electron-transfer flavoprotein]. The enzyme catalyses dodecanoyl-CoA + oxidized [electron-transfer flavoprotein] + H(+) = (2E)-dodecenoyl-CoA + reduced [electron-transfer flavoprotein]. It catalyses the reaction tetradecanoyl-CoA + oxidized [electron-transfer flavoprotein] + H(+) = (2E)-tetradecenoyl-CoA + reduced [electron-transfer flavoprotein]. The catalysed reaction is oxidized [electron-transfer flavoprotein] + hexadecanoyl-CoA + H(+) = (2E)-hexadecenoyl-CoA + reduced [electron-transfer flavoprotein]. It carries out the reaction octadecanoyl-CoA + oxidized [electron-transfer flavoprotein] + H(+) = (2E)-octadecenoyl-CoA + reduced [electron-transfer flavoprotein]. The enzyme catalyses eicosanoyl-CoA + oxidized [electron-transfer flavoprotein] + H(+) = (2E)-eicosenoyl-CoA + reduced [electron-transfer flavoprotein]. It catalyses the reaction docosanoyl-CoA + oxidized [electron-transfer flavoprotein] + H(+) = (2E)-docosenoyl-CoA + reduced [electron-transfer flavoprotein]. The catalysed reaction is tetracosanoyl-CoA + oxidized [electron-transfer flavoprotein] + H(+) = (2E)-tetracosenoyl-CoA + reduced [electron-transfer flavoprotein]. It carries out the reaction (5E)-tetradecenoyl-CoA + oxidized [electron-transfer flavoprotein] + H(+) = (2E,5E)-tetradecadienoyl-CoA + reduced [electron-transfer flavoprotein]. The enzyme catalyses (5Z)-tetradecenoyl-CoA + oxidized [electron-transfer flavoprotein] + H(+) = (2E,5Z)-tetradecadienoyl-CoA + reduced [electron-transfer flavoprotein]. It catalyses the reaction oxidized [electron-transfer flavoprotein] + (9Z)-octadecenoyl-CoA + H(+) = (2E,9Z)-octadecadienoyl-CoA + reduced [electron-transfer flavoprotein]. The protein operates within lipid metabolism; mitochondrial fatty acid beta-oxidation. In terms of biological role, long-chain specific acyl-CoA dehydrogenase is one of the acyl-CoA dehydrogenases that catalyze the first step of mitochondrial fatty acid beta-oxidation, an aerobic process breaking down fatty acids into acetyl-CoA and allowing the production of energy from fats. The first step of fatty acid beta-oxidation consists in the removal of one hydrogen from C-2 and C-3 of the straight-chain fatty acyl-CoA thioester, resulting in the formation of trans-2-enoyl-CoA. Among the different mitochondrial acyl-CoA dehydrogenases, long-chain specific acyl-CoA dehydrogenase can act on saturated and unsaturated acyl-CoAs with 6 to 24 carbons with a preference for 8 to 18 carbons long primary chains. The polypeptide is Long-chain specific acyl-CoA dehydrogenase, mitochondrial (Sus scrofa (Pig)).